Reading from the N-terminus, the 115-residue chain is MKFVLLFGVLLVTLFSYSSAEMLDDFDQADEDELLSLIEKEEARAKECTPRFYDCSHDRHSCCRSELFKDVCTCFYPEGGDNEVCTCQQPKHLKYMEKAADKAKKFGGKIKKWFG.

Residues 1-20 form the signal peptide; the sequence is MKFVLLFGVLLVTLFSYSSA. A propeptide spanning residues 21–44 is cleaved from the precursor; it reads EMLDDFDQADEDELLSLIEKEEAR. 4 disulfides stabilise this stretch: Cys-48/Cys-63, Cys-55/Cys-72, Cys-62/Cys-87, and Cys-74/Cys-85.

This sequence belongs to the neurotoxin 19 (CSTX) family. 01 subfamily. As to expression, expressed by the venom gland.

The protein resides in the secreted. This Lycosa singoriensis (Wolf spider) protein is U3-lycotoxin-Ls1a.